Here is a 314-residue protein sequence, read N- to C-terminus: MKHLLSIADLTRESAVELLDEAERFEQALLGREVRKLPTLRGRTVMTVFFENSTRTRVSFEVAGKWMSADVINVSASSSSVSKGESLRDTAMTLRAAGADALIVRHPASGAAHQIAKWTGHQDDGGPAVINAGDGTHEHPTQALLDALTLRQRLGDIEGKRIAIVGDILHSRVARSNALLLSMLGAEVVLVAPPTLLPVGVSAWPVSVAHSLDAELPGLDAVLMLRVQAERMNGGFFPSQREYSINYGLSEKRLALLPDHAVVLHPGPMLRGMEIASAVADSTRTAVLQQVTNGVHMRMAVLFRLLVGAEEVAG.

2 residues coordinate carbamoyl phosphate: arginine 55 and threonine 56. Lysine 83 serves as a coordination point for L-aspartate. Positions 105, 139, and 142 each coordinate carbamoyl phosphate. Residues arginine 172 and arginine 226 each contribute to the L-aspartate site. The carbamoyl phosphate site is built by glycine 267 and proline 268.

The protein belongs to the aspartate/ornithine carbamoyltransferase superfamily. ATCase family. In terms of assembly, heterododecamer (2C3:3R2) of six catalytic PyrB chains organized as two trimers (C3), and six regulatory PyrI chains organized as three dimers (R2).

It carries out the reaction carbamoyl phosphate + L-aspartate = N-carbamoyl-L-aspartate + phosphate + H(+). It participates in pyrimidine metabolism; UMP biosynthesis via de novo pathway; (S)-dihydroorotate from bicarbonate: step 2/3. Functionally, catalyzes the condensation of carbamoyl phosphate and aspartate to form carbamoyl aspartate and inorganic phosphate, the committed step in the de novo pyrimidine nucleotide biosynthesis pathway. This Rhodococcus jostii (strain RHA1) protein is Aspartate carbamoyltransferase catalytic subunit.